The following is a 374-amino-acid chain: 1,3,6,8-tetrahydroxynaphthalene synthase (374 aa).

Cys138 is an active-site residue.

This sequence belongs to the thiolase-like superfamily. Chalcone/stilbene synthases family. In terms of assembly, homodimer.

The catalysed reaction is 5 malonyl-CoA + 5 H(+) = naphthalene-1,3,6,8-tetrol + 5 CO2 + 5 CoA + H2O. The protein operates within pigment biosynthesis; melanin biosynthesis. Functionally, involved in the biosynthesis of melanin but also various secondary metabolites containing a naphthoquinone ring. Catalyzes the iterative condensation of five CoA-linked malonyl units to form a pentaketide intermediate. THNS subsequently catalyzes the dual intramolecular Claisen and aldol condensations of this linear intermediate to produce the fused ring of 1,3,6,8-tetrahydroxynaphthalene (THN). The chain is 1,3,6,8-tetrahydroxynaphthalene synthase from Streptomyces coelicolor (strain ATCC BAA-471 / A3(2) / M145).